We begin with the raw amino-acid sequence, 345 residues long: MTDKTSLSYKDAGVDIDAGNALVGRIKGVVKKTRRPEVMGGLGGFGALYALPQKYREPVLVSGTDGVGTKLRLAMDLKRHDTIGIDLVAMCVNDLVVQGAEPLFFLDYYATGKLDVDTASAVISGIAEGCLQSGCSLVGGETAEMPGMYHGEDYDVAGFCVGVVEKSEIIDGSKVSDGDVLIALGSSGPHSNGYSLVRKILEVSGCDPQTTELDGKPLADHLLAPTRIYVKSVLELIEKVDVHAIAHLTGGGFWENIPRVLPDNTQAVIDESSWQWPEVFNWLQTAGNVERHEMYRTFNCGVGMIIALPAPEVDKALALLNANGENAWKIGIIKASDSEQRVVIE.

Belongs to the AIR synthase family.

Its subcellular location is the cytoplasm. It carries out the reaction 2-formamido-N(1)-(5-O-phospho-beta-D-ribosyl)acetamidine + ATP = 5-amino-1-(5-phospho-beta-D-ribosyl)imidazole + ADP + phosphate + H(+). The protein operates within purine metabolism; IMP biosynthesis via de novo pathway; 5-amino-1-(5-phospho-D-ribosyl)imidazole from N(2)-formyl-N(1)-(5-phospho-D-ribosyl)glycinamide: step 2/2. The sequence is that of Phosphoribosylformylglycinamidine cyclo-ligase from Escherichia coli (strain SE11).